The chain runs to 375 residues: tRNA-specific 2-thiouridylase MnmA (375 aa).

ATP is bound by residues 12–19 (GMSGGVDS) and Met-38. Residues 98–100 (NPD) form an interaction with target base in tRNA region. Cys-103 serves as the catalytic Nucleophile. A disulfide bond links Cys-103 and Cys-200. Residue Gly-127 participates in ATP binding. Positions 150–152 (KDQ) are interaction with tRNA. The active-site Cysteine persulfide intermediate is the Cys-200. Residues 312 to 313 (RY) form an interaction with tRNA region.

This sequence belongs to the MnmA/TRMU family.

The protein localises to the cytoplasm. It carries out the reaction S-sulfanyl-L-cysteinyl-[protein] + uridine(34) in tRNA + AH2 + ATP = 2-thiouridine(34) in tRNA + L-cysteinyl-[protein] + A + AMP + diphosphate + H(+). Its function is as follows. Catalyzes the 2-thiolation of uridine at the wobble position (U34) of tRNA, leading to the formation of s(2)U34. This chain is tRNA-specific 2-thiouridylase MnmA, found in Levilactobacillus brevis (strain ATCC 367 / BCRC 12310 / CIP 105137 / JCM 1170 / LMG 11437 / NCIMB 947 / NCTC 947) (Lactobacillus brevis).